Reading from the N-terminus, the 223-residue chain is MIF4G domain-containing protein A (223 aa).

Positions Q7 to G206 constitute an MIF4G domain.

Belongs to the MIF4GD family. As to quaternary structure, interacts with eif4g1, eif4g2 and slbp; probably tethered by SLBP to the 3'-end of mRNAs ending with the histone stem-loop, it also interacts with eif4g1 which is bound to their 5'-end.

The protein resides in the cytoplasm. The protein localises to the nucleus. Functions in replication-dependent translation of histone mRNAs which differ from other eukaryotic mRNAs in that they do not end with a poly-A tail but a stem-loop. May participate in circularizing those mRNAs specifically enhancing their translation. This Xenopus laevis (African clawed frog) protein is MIF4G domain-containing protein A (mif4gd-a).